We begin with the raw amino-acid sequence, 454 residues long: NEDD8-activating enzyme E1 catalytic subunit (454 aa).

A2 is subject to N-acetylalanine. 56-80 (GLGCELLKDLALSGFRNLEVIDMDR) serves as a coordination point for ATP. The active-site Glycyl thioester intermediate is C215.

This sequence belongs to the ubiquitin-activating E1 family. UBA3 subfamily. In terms of assembly, heterodimer of UBA3/ECR1 and AXR1. Interacts with NEDD8 and RCE1. Expressed in shoot, root and floral meristems, in vascular tissues of cotyledons and mature leaves, and in the stele of the root.

The protein resides in the nucleus. It carries out the reaction ATP + [NEDD8 protein] + [E1 NEDD8-activating enzyme]-L-cysteine = AMP + diphosphate + [E1 NEDD8-activating enzyme]-S-[NEDD8 protein]-yl-L-cysteine.. The protein operates within protein modification; protein neddylation. Functionally, catalytic subunit of the dimeric ECR1-AXR1 E1 enzyme. E1 activates NEDD8/RUB1 by first adenylating its C-terminal glycine residue with ATP, thereafter linking this residue to the side chain of the catalytic cysteine, yielding a NEDD8-ECR1 thioester and free AMP. E1 finally transfers NEDD8 to the catalytic cysteine of RCE1. The chain is NEDD8-activating enzyme E1 catalytic subunit (ECR1) from Arabidopsis thaliana (Mouse-ear cress).